A 578-amino-acid chain; its full sequence is Arginine--tRNA ligase (578 aa).

The 'HIGH' region motif lies at 122–132; sequence PNLAKEMHVGH.

The protein belongs to the class-I aminoacyl-tRNA synthetase family. Monomer.

Its subcellular location is the cytoplasm. The catalysed reaction is tRNA(Arg) + L-arginine + ATP = L-arginyl-tRNA(Arg) + AMP + diphosphate. This Pseudoalteromonas atlantica (strain T6c / ATCC BAA-1087) protein is Arginine--tRNA ligase.